A 141-amino-acid chain; its full sequence is Large ribosomal subunit protein uL11 (141 aa).

The protein belongs to the universal ribosomal protein uL11 family. In terms of assembly, part of the ribosomal stalk of the 50S ribosomal subunit. Interacts with L10 and the large rRNA to form the base of the stalk. L10 forms an elongated spine to which L12 dimers bind in a sequential fashion forming a multimeric L10(L12)X complex. Post-translationally, one or more lysine residues are methylated.

Its function is as follows. Forms part of the ribosomal stalk which helps the ribosome interact with GTP-bound translation factors. The sequence is that of Large ribosomal subunit protein uL11 from Crocosphaera subtropica (strain ATCC 51142 / BH68) (Cyanothece sp. (strain ATCC 51142)).